The chain runs to 577 residues: Arginine--tRNA ligase (577 aa).

The short motif at 122–132 (PNVAKEMHVGH) is the 'HIGH' region element.

It belongs to the class-I aminoacyl-tRNA synthetase family. In terms of assembly, monomer.

It localises to the cytoplasm. The enzyme catalyses tRNA(Arg) + L-arginine + ATP = L-arginyl-tRNA(Arg) + AMP + diphosphate. The protein is Arginine--tRNA ligase of Salmonella paratyphi A (strain ATCC 9150 / SARB42).